The following is a 63-amino-acid chain: Putative alpha-neurotoxin RjAa9 (63 aa).

Positions 1 to 60 (KEGYPVDWGNCKYECMSDEYCKDLCADRKATSGYCYKLNWSCYCKGLPDDSPIKTPGKCR) constitute an LCN-type CS-alpha/beta domain. 4 cysteine pairs are disulfide-bonded: cysteine 11–cysteine 59, cysteine 15–cysteine 35, cysteine 21–cysteine 42, and cysteine 25–cysteine 44.

The protein belongs to the long (4 C-C) scorpion toxin superfamily. Sodium channel inhibitor family. Alpha subfamily. In terms of tissue distribution, expressed by the venom gland.

It localises to the secreted. Alpha toxins bind voltage-independently at site-3 of sodium channels (Nav) and inhibits the inactivation of the activated channels, thereby blocking neuronal transmission. The polypeptide is Putative alpha-neurotoxin RjAa9 (Rhopalurus junceus (Caribbean blue scorpion)).